The primary structure comprises 91 residues: Small nuclear ribonucleoprotein F (91 aa).

Residues 8–81 (APKPFLYDLK…VLFVRGIDDE (74 aa)) enclose the Sm domain.

It belongs to the snRNP Sm proteins family. SmF/LSm6 subfamily. In terms of assembly, core component of the spliceosomal U1, U2, U4 and U5 small nuclear ribonucleoproteins (snRNPs), the building blocks of the spliceosome. Most spliceosomal snRNPs contain a common set of Sm proteins, SNRPB, SNRPD1, SNRPD2, SNRPD3, SNRPE, SNRPF and SNRPG that assemble in a heptameric protein ring on the Sm site of the small nuclear RNA to form the core snRNP. Component of the U1 snRNP. Component of the U4/U6-U5 tri-snRNP complex. Component of the U7 snRNP complex. Component of the U11/U12 snRNPs that are part of the U12-type spliceosome. Part of the SMN-Sm complex that catalyzes core snRNPs assembly.

The protein resides in the cytoplasm. It localises to the cytosol. The protein localises to the nucleus. In terms of biological role, plays a role in pre-mRNA splicing as a core component of the spliceosomal U1, U2, U4 and U5 small nuclear ribonucleoproteins (snRNPs), the building blocks of the spliceosome. Component of both the pre-catalytic spliceosome B complex and activated spliceosome C complexes. Is also a component of the minor U12 spliceosome. The polypeptide is Small nuclear ribonucleoprotein F (snrpf) (Dictyostelium discoideum (Social amoeba)).